The following is a 326-amino-acid chain: ATP synthase subunit b 2 (326 aa).

A helical transmembrane segment spans residues 2-22 (LIDWFTVVAQALNFLILVWLL). Composition is skewed to basic and acidic residues over residues 275–298 (QQGRKEGRAVQNWDKAESEIRKEN) and 306–326 (PPPEAKAKPKPEEPKPEIGSP). The tract at residues 275 to 326 (QQGRKEGRAVQNWDKAESEIRKENLSPAKTEPPPEAKAKPKPEEPKPEIGSP) is disordered.

This sequence belongs to the ATPase B chain family. In terms of assembly, F-type ATPases have 2 components, F(1) - the catalytic core - and F(0) - the membrane proton channel. F(1) has five subunits: alpha(3), beta(3), gamma(1), delta(1), epsilon(1). F(0) has three main subunits: a(1), b(2) and c(10-14). The alpha and beta chains form an alternating ring which encloses part of the gamma chain. F(1) is attached to F(0) by a central stalk formed by the gamma and epsilon chains, while a peripheral stalk is formed by the delta and b chains.

The protein localises to the cell inner membrane. Its function is as follows. F(1)F(0) ATP synthase produces ATP from ADP in the presence of a proton or sodium gradient. F-type ATPases consist of two structural domains, F(1) containing the extramembraneous catalytic core and F(0) containing the membrane proton channel, linked together by a central stalk and a peripheral stalk. During catalysis, ATP synthesis in the catalytic domain of F(1) is coupled via a rotary mechanism of the central stalk subunits to proton translocation. Functionally, component of the F(0) channel, it forms part of the peripheral stalk, linking F(1) to F(0). This is ATP synthase subunit b 2 from Albidiferax ferrireducens (strain ATCC BAA-621 / DSM 15236 / T118) (Rhodoferax ferrireducens).